Reading from the N-terminus, the 285-residue chain is Inositol oxygenase (285 aa).

Arginine 29 lines the substrate pocket. Serine 33 is modified (phosphoserine). Aspartate 85 to serine 87 contacts substrate. Fe cation-binding residues include histidine 98, histidine 123, and aspartate 124. Residues lysine 127 and glycine 141 to aspartate 142 each bind substrate. Residues histidine 194, histidine 220, and aspartate 253 each coordinate Fe cation. Histidine 220–serine 221 contributes to the substrate binding site.

The protein belongs to the myo-inositol oxygenase family. The cofactor is Fe cation. As to expression, kidney specific.

It localises to the cytoplasm. It catalyses the reaction myo-inositol + O2 = D-glucuronate + H2O + H(+). It participates in polyol metabolism; myo-inositol degradation into D-glucuronate; D-glucuronate from myo-inositol: step 1/1. The protein is Inositol oxygenase (MIOX) of Homo sapiens (Human).